The sequence spans 596 residues: Leucine-rich repeat and IQ domain-containing protein 4 (596 aa).

LRR repeat units follow at residues 22–44 (LPRL…LLRQ), 59–83 (LTDR…ILAL), 84–106 (KELE…IQQL), 108–129 (NTKV…LGAL), 130–152 (SSLE…VVSR), 153–176 (LRTL…ICKS), 177–200 (LHHL…IVNQ), 202–223 (KLRE…LCVL), 224–246 (YNLE…IGHL), 248–269 (RLQK…LSQC), 270–293 (SKLS…ELLT), 295–315 (LTEV…LCSW), 317–337 (SLHL…SFKR), 338–361 (LINL…ICAL), 362–384 (KNLE…ISLL), 385–407 (SNLK…IFSL), 410–433 (LEKL…IKRL), 434–457 (MNLK…GLMP), 459–479 (LEVL…ICRT), 480–502 (RNLR…LDHL), 504–525 (NLKV…VCNQ), and 527–549 (NEAI…TIQA). An IQ domain is found at 540-569 (RKMMATTIQAWWRGIMVRKGYGSYEELLKA). The segment covering 569-587 (ARKKGKSPPKDKKGKKAAK) has biased composition (basic residues). Residues 569–596 (ARKKGKSPPKDKKGKKAAKGKPEKGNKK) are disordered.

The sequence is that of Leucine-rich repeat and IQ domain-containing protein 4 (Lrriq4) from Mus musculus (Mouse).